The chain runs to 114 residues: Superoxide dismutase [Cu-Zn] (114 aa).

Residues H37, H39, and H54 each contribute to the Cu cation site. A disordered region spans residues 49-73 (MSSGPHYNPRNKEHGAPTDENRHLG). H54, H62, H71, and D74 together coordinate Zn(2+). The span at 58–73 (RNKEHGAPTDENRHLG) shows a compositional bias: basic and acidic residues. Residue H111 participates in Cu cation binding.

Belongs to the Cu-Zn superoxide dismutase family. As to quaternary structure, homodimer. Cu cation serves as cofactor. Zn(2+) is required as a cofactor.

It localises to the cytoplasm. The enzyme catalyses 2 superoxide + 2 H(+) = H2O2 + O2. Functionally, destroys radicals which are normally produced within the cells and which are toxic to biological systems. This is Superoxide dismutase [Cu-Zn] from Drosophila madeirensis (Fruit fly).